A 318-amino-acid chain; its full sequence is Aspartate carbamoyltransferase catalytic subunit (318 aa).

Arg-57 and Thr-58 together coordinate carbamoyl phosphate. Residue Lys-85 participates in L-aspartate binding. Carbamoyl phosphate is bound by residues Arg-107, His-141, and Gln-144. Residues Arg-174 and Arg-228 each contribute to the L-aspartate site. Residues Gly-269 and Pro-270 each contribute to the carbamoyl phosphate site.

It belongs to the aspartate/ornithine carbamoyltransferase superfamily. ATCase family. In terms of assembly, heterododecamer (2C3:3R2) of six catalytic PyrB chains organized as two trimers (C3), and six regulatory PyrI chains organized as three dimers (R2).

The enzyme catalyses carbamoyl phosphate + L-aspartate = N-carbamoyl-L-aspartate + phosphate + H(+). It functions in the pathway pyrimidine metabolism; UMP biosynthesis via de novo pathway; (S)-dihydroorotate from bicarbonate: step 2/3. In terms of biological role, catalyzes the condensation of carbamoyl phosphate and aspartate to form carbamoyl aspartate and inorganic phosphate, the committed step in the de novo pyrimidine nucleotide biosynthesis pathway. This chain is Aspartate carbamoyltransferase catalytic subunit, found in Mycolicibacterium smegmatis (strain ATCC 700084 / mc(2)155) (Mycobacterium smegmatis).